We begin with the raw amino-acid sequence, 567 residues long: Glucose-6-phosphate isomerase, cytosolic (567 aa).

Residue Glu360 is the Proton donor of the active site. Residues His391 and Lys516 contribute to the active site.

Belongs to the GPI family. Homodimer.

It localises to the cytoplasm. The enzyme catalyses alpha-D-glucose 6-phosphate = beta-D-fructose 6-phosphate. Its pathway is carbohydrate degradation; glycolysis; D-glyceraldehyde 3-phosphate and glycerone phosphate from D-glucose: step 2/4. This chain is Glucose-6-phosphate isomerase, cytosolic (PHI1), found in Zea mays (Maize).